Reading from the N-terminus, the 161-residue chain is NAD(P)H-quinone oxidoreductase subunit I, chloroplastic (161 aa).

2 consecutive 4Fe-4S ferredoxin-type domains span residues 55–84 (GRIH…VDWK) and 95–124 (LNYS…MTEE). [4Fe-4S] cluster contacts are provided by cysteine 64, cysteine 67, cysteine 70, cysteine 74, cysteine 104, cysteine 107, cysteine 110, and cysteine 114.

Belongs to the complex I 23 kDa subunit family. In terms of assembly, NDH is composed of at least 16 different subunits, 5 of which are encoded in the nucleus. [4Fe-4S] cluster is required as a cofactor.

The protein localises to the plastid. The protein resides in the chloroplast thylakoid membrane. The enzyme catalyses a plastoquinone + NADH + (n+1) H(+)(in) = a plastoquinol + NAD(+) + n H(+)(out). It catalyses the reaction a plastoquinone + NADPH + (n+1) H(+)(in) = a plastoquinol + NADP(+) + n H(+)(out). NDH shuttles electrons from NAD(P)H:plastoquinone, via FMN and iron-sulfur (Fe-S) centers, to quinones in the photosynthetic chain and possibly in a chloroplast respiratory chain. The immediate electron acceptor for the enzyme in this species is believed to be plastoquinone. Couples the redox reaction to proton translocation, and thus conserves the redox energy in a proton gradient. In Phaseolus vulgaris (Kidney bean), this protein is NAD(P)H-quinone oxidoreductase subunit I, chloroplastic.